A 334-amino-acid chain; its full sequence is Aspartate carbamoyltransferase catalytic subunit (334 aa).

Positions 71 and 72 each coordinate carbamoyl phosphate. Position 99 (Lys99) interacts with L-aspartate. Arg121, His151, and Gln154 together coordinate carbamoyl phosphate. L-aspartate is bound by residues Arg184 and Arg239. Gly280 and Pro281 together coordinate carbamoyl phosphate.

It belongs to the aspartate/ornithine carbamoyltransferase superfamily. ATCase family. In terms of assembly, heterododecamer (2C3:3R2) of six catalytic PyrB chains organized as two trimers (C3), and six regulatory PyrI chains organized as three dimers (R2).

The catalysed reaction is carbamoyl phosphate + L-aspartate = N-carbamoyl-L-aspartate + phosphate + H(+). It functions in the pathway pyrimidine metabolism; UMP biosynthesis via de novo pathway; (S)-dihydroorotate from bicarbonate: step 2/3. In terms of biological role, catalyzes the condensation of carbamoyl phosphate and aspartate to form carbamoyl aspartate and inorganic phosphate, the committed step in the de novo pyrimidine nucleotide biosynthesis pathway. This Pseudomonas fluorescens (strain Pf0-1) protein is Aspartate carbamoyltransferase catalytic subunit.